The following is a 259-amino-acid chain: Trans-4-hydroxycyclohexanecarboxylate dehydrogenase (259 aa).

Positions 20, 22, 41, 73, 74, 100, 164, 168, 197, 199, and 202 each coordinate NAD(+). The Proton acceptor role is filled by Tyr164.

Belongs to the short-chain dehydrogenases/reductases (SDR) family. In terms of assembly, homodimer. Homotetramer.

It catalyses the reaction trans-4-hydroxycyclohexane-1-carboxylate + NAD(+) = 4-oxocyclohexane-1-carboxylate + NADH + H(+). Strongly inhibited by N-bromosuccinimide. Not inhibited by sulfhydryl reagents, such as iodoacetic acid, iodoacetamide, N-ethylmaleimide and p-hydroxymercuribenzoic acid. Its function is as follows. Dehydrogenase involved in a cyclohexanecarboxylate (CHCA) degradation pathway. Catalyzes the NAD(+)-dependent dehydrogenation of trans-4-hydroxycyclohexanecarboxylate (trans-4-hydroxyCHCA) to form 4-oxocyclohexanecarboxylate (4-oxoCHCA). Is highly specific for the trans-4-hydroxy derivative and shows only weak activity with cis-4-hydroxyCHCA. Can also catalyze the reverse reaction (4-oxoCHCA reduction) with a higher catalytic efficiency. In the reverse reaction, is highly specific for 4-oxoCHCA and cannot use either the 2-oxo or the 3-oxo homolog as substrate. Cannot use NADP(+). This is Trans-4-hydroxycyclohexanecarboxylate dehydrogenase from Sinomonas cyclohexanicum (Corynebacterium cyclohexanicum).